We begin with the raw amino-acid sequence, 226 residues long: Putative N-acetylmannosamine-6-phosphate 2-epimerase 1 (226 aa).

The protein belongs to the NanE family.

The catalysed reaction is an N-acyl-D-glucosamine 6-phosphate = an N-acyl-D-mannosamine 6-phosphate. The protein operates within amino-sugar metabolism; N-acetylneuraminate degradation; D-fructose 6-phosphate from N-acetylneuraminate: step 3/5. In terms of biological role, converts N-acetylmannosamine-6-phosphate (ManNAc-6-P) to N-acetylglucosamine-6-phosphate (GlcNAc-6-P). The protein is Putative N-acetylmannosamine-6-phosphate 2-epimerase 1 of Salmonella paratyphi A (strain ATCC 9150 / SARB42).